Consider the following 314-residue polypeptide: Putative thiamine biosynthesis protein HI_0357 (314 aa).

The protein belongs to the NMT1/THI5 family.

In terms of biological role, probably involved in thiamine biosynthesis. The polypeptide is Putative thiamine biosynthesis protein HI_0357 (Haemophilus influenzae (strain ATCC 51907 / DSM 11121 / KW20 / Rd)).